The chain runs to 498 residues: Cytochrome P450 monooxygenase 110 (498 aa).

Residues 7–24 form a helical membrane-spanning segment; it reads YVFALLGILATLYFVRWS. Residue asparagine 425 is glycosylated (N-linked (GlcNAc...) asparagine). Cysteine 440 contributes to the heme binding site.

Belongs to the cytochrome P450 family. Requires heme as cofactor.

It localises to the membrane. The protein operates within secondary metabolite biosynthesis. Its function is as follows. Cytochrome P450 monooxygenase that is able to use dehydroabietic acid and testosterone as substrates for oxidation, suggesting that the natural substrate(s) may be structurally related to steroid compounds. The chain is Cytochrome P450 monooxygenase 110 from Postia placenta (strain ATCC 44394 / Madison 698-R) (Brown rot fungus).